Consider the following 137-residue polypeptide: Holo-[acyl-carrier-protein] synthase (137 aa).

Residues Asp8 and Glu58 each contribute to the Mg(2+) site.

This sequence belongs to the P-Pant transferase superfamily. AcpS family. Mg(2+) is required as a cofactor.

It is found in the cytoplasm. The catalysed reaction is apo-[ACP] + CoA = holo-[ACP] + adenosine 3',5'-bisphosphate + H(+). Transfers the 4'-phosphopantetheine moiety from coenzyme A to a Ser of acyl-carrier-protein. This chain is Holo-[acyl-carrier-protein] synthase, found in Lactobacillus delbrueckii subsp. bulgaricus (strain ATCC 11842 / DSM 20081 / BCRC 10696 / JCM 1002 / NBRC 13953 / NCIMB 11778 / NCTC 12712 / WDCM 00102 / Lb 14).